Reading from the N-terminus, the 700-residue chain is Inhibitor of carbonic anhydrase (700 aa).

Positions Met-1 to Ala-19 are cleaved as a signal peptide. Transferrin-like domains lie at Ile-25–Arg-347 and Val-355–Gln-685. 16 disulfides stabilise this stretch: Cys-28–Cys-67, Cys-38–Cys-58, Cys-137–Cys-213, Cys-172–Cys-188, Cys-175–Cys-198, Cys-185–Cys-196, Cys-246–Cys-260, Cys-358–Cys-390, Cys-368–Cys-381, Cys-415–Cys-695, Cys-438–Cys-658, Cys-470–Cys-545, Cys-494–Cys-686, Cys-504–Cys-518, Cys-515–Cys-528, and Cys-585–Cys-599. Asn-664 carries N-linked (GlcNAc...) asparagine glycosylation.

The protein belongs to the transferrin family. Monomer. Interacts (via transferrin-like domain 2) with CA2. N-glycosylated. In terms of tissue distribution, detected in blood plasma, heart, kidney, liver, colon, lung, spleen, pancreas and testis (at protein level).

Its subcellular location is the secreted. In terms of biological role, inhibitor for carbonic anhydrase 2 (CA2). Does not bind iron ions. The polypeptide is Inhibitor of carbonic anhydrase (Mus musculus (Mouse)).